The chain runs to 62 residues: Keratin-associated protein 19-5 (62 aa).

The tract at residues 5-56 is 14 X 2 AA repeats of G-[YCGS]; it reads GSYYGGLGSGIRGFGNLGYGYGCGCGFGGYGYGSGYGRYGYGYPRPLYYGGY.

The protein belongs to the KRTAP type 19 family. Interacts with hair keratins. Expressed in skin during two hair growth cycles. Expression restricted to the cortical cells of hair follicles, appearing first in the cortical cells processing the flat nuclei located a few cells above the dermal papilla.

Functionally, in the hair cortex, hair keratin intermediate filaments are embedded in an interfilamentous matrix, consisting of hair keratin-associated proteins (KRTAP), which are essential for the formation of a rigid and resistant hair shaft through their extensive disulfide bond cross-linking with abundant cysteine residues of hair keratins. The matrix proteins include the high-sulfur and high-glycine-tyrosine keratins. The sequence is that of Keratin-associated protein 19-5 (Krtap19-5) from Mus musculus (Mouse).